Here is a 1301-residue protein sequence, read N- to C-terminus: Tyrosine-protein phosphatase 99A (1301 aa).

The first 28 residues, 1 to 28 (MPRPQHHALLRAMLKLLLFASIAEHCAT), serve as a signal peptide directing secretion. Residues 29 to 394 (ALPTNSSNSP…RQSHNDYNLA (366 aa)) are Extracellular-facing. Residues 31-63 (PTNSSNSPSSPSPFTVASLPPTTASSSSSPAVI) are disordered. Residue Asn-33 is glycosylated (N-linked (GlcNAc...) asparagine). A compositionally biased stretch (low complexity) spans 33-63 (NSSNSPSSPSPFTVASLPPTTASSSSSPAVI). Fibronectin type-III domains follow at residues 66–165 (SSFD…YAAV), 173–269 (KPQN…TDVG), and 270–376 (GPSA…LQPN). Residues Asn-176, Asn-212, Asn-278, Asn-322, and Asn-336 are each glycosylated (N-linked (GlcNAc...) asparagine). The helical transmembrane segment at 395–415 (VLVGIIFSCFGIILIIMAFFL) threads the bilayer. At 416–1301 (WSRKCFHAAY…TDAQNLDIVG (886 aa)) the chain is on the cytoplasmic side. Tyrosine-protein phosphatase domains follow at residues 476–741 (FSRE…LVEA) and 764–1016 (LEQQ…LSFL). Residue Cys-682 is the Phosphocysteine intermediate of the active site. The segment covering 1092–1106 (TALNETVSTPSTDTN) has biased composition (polar residues). 2 disordered regions span residues 1092-1199 (TALN…PTIP) and 1257-1281 (VGDL…NNHI). Over residues 1107 to 1130 (PSLLPILSLLPPTVAPLSSSSSTT) the composition is skewed to low complexity. Over residues 1131 to 1142 (PPTPSTPTPQPP) the composition is skewed to pro residues. A compositionally biased stretch (polar residues) spans 1150-1161 (HSPSDLSHQISS). Residues 1162–1188 (TVANAASPVTPATASASAGATPTTPMT) are compositionally biased toward low complexity. Residues 1264–1273 (NADNSPTASP) are compositionally biased toward polar residues.

Belongs to the protein-tyrosine phosphatase family. Receptor class subfamily. In terms of tissue distribution, selectively expressed in a subset of axons and pioneer neurons (including aCC and RP2) in the embryo.

The protein localises to the membrane. The enzyme catalyses O-phospho-L-tyrosyl-[protein] + H2O = L-tyrosyl-[protein] + phosphate. In terms of biological role, may play a key role in signal transduction and growth control. May have a role in the establishment of the intersegmental and segmental nerves. In Drosophila melanogaster (Fruit fly), this protein is Tyrosine-protein phosphatase 99A (Ptp99A).